Reading from the N-terminus, the 326-residue chain is Protein-arginine N-acetylglucosaminyltransferase NleB2 (326 aa).

UDP-N-acetyl-alpha-D-glucosamine contacts are provided by residues 45 to 47 (QWF), tyrosine 69, and 216 to 219 (YLDM). A DXD motif motif is present at residues 218-220 (DMD). Position 220 (aspartate 220) interacts with Mn(2+). Glutamate 250 functions as the Proton acceptor in the catalytic mechanism. Mn(2+)-binding residues include asparagine 317 and serine 319. UDP-N-acetyl-alpha-D-glucosamine contacts are provided by residues serine 319 and 324 to 326 (SSW).

This sequence belongs to the glycosyltransferase NleB family. Mn(2+) is required as a cofactor.

It localises to the secreted. Its subcellular location is the host cell. The enzyme catalyses L-arginyl-[protein] + UDP-N-acetyl-alpha-D-glucosamine = N(omega)-(N-acetyl-beta-D-glucosaminyl)-L-arginyl-[protein] + UDP + H(+). In terms of biological role, protein-arginine N-acetylglucosaminyltransferase effector that catalyzes the transfer of a single N-acetylglucosamine (GlcNAc) to a conserved arginine residue of host target proteins. In contrast to NleB1, not able to disrupt TNF signaling in infected cells. Shows a lower enzymatic activity than NleB1. This Escherichia coli O127:H6 (strain E2348/69 / EPEC) protein is Protein-arginine N-acetylglucosaminyltransferase NleB2.